Here is a 354-residue protein sequence, read N- to C-terminus: tRNA N6-adenosine threonylcarbamoyltransferase (354 aa).

The Fe cation site is built by histidine 111 and histidine 115. Substrate is bound by residues 134–138 (LVSGG), aspartate 167, glycine 180, and asparagine 279. Aspartate 319 lines the Fe cation pocket.

It belongs to the KAE1 / TsaD family. Requires Fe(2+) as cofactor.

The protein localises to the cytoplasm. The enzyme catalyses L-threonylcarbamoyladenylate + adenosine(37) in tRNA = N(6)-L-threonylcarbamoyladenosine(37) in tRNA + AMP + H(+). Functionally, required for the formation of a threonylcarbamoyl group on adenosine at position 37 (t(6)A37) in tRNAs that read codons beginning with adenine. Is involved in the transfer of the threonylcarbamoyl moiety of threonylcarbamoyl-AMP (TC-AMP) to the N6 group of A37, together with TsaE and TsaB. TsaD likely plays a direct catalytic role in this reaction. This chain is tRNA N6-adenosine threonylcarbamoyltransferase, found in Neisseria meningitidis serogroup B (strain ATCC BAA-335 / MC58).